A 131-amino-acid chain; its full sequence is Fumarate reductase subunit C (131 aa).

3 consecutive transmembrane segments (helical) span residues 30-50 (EGTAVPAVWFSIELIFGLFAL), 63-83 (FLQNPVIVIINLITLAAALLH), and 109-129 (IIKSLWAVTVVATIVILFVAL).

The protein belongs to the FrdC family. In terms of assembly, part of an enzyme complex containing four subunits: a flavoprotein (FrdA), an iron-sulfur protein (FrdB), and two hydrophobic anchor proteins (FrdC and FrdD).

The protein localises to the cell inner membrane. Functionally, two distinct, membrane-bound, FAD-containing enzymes are responsible for the catalysis of fumarate and succinate interconversion; fumarate reductase is used in anaerobic growth, and succinate dehydrogenase is used in aerobic growth. Anchors the catalytic components of the fumarate reductase complex to the cell inner membrane, binds quinones. The chain is Fumarate reductase subunit C from Shigella boydii serotype 4 (strain Sb227).